The chain runs to 143 residues: Ribosome-binding factor A (143 aa).

A disordered region spans residues 123–143 (DKSLQENYKQNDKETKAEKLR).

Belongs to the RbfA family. Monomer. Binds 30S ribosomal subunits, but not 50S ribosomal subunits or 70S ribosomes.

It localises to the cytoplasm. One of several proteins that assist in the late maturation steps of the functional core of the 30S ribosomal subunit. Associates with free 30S ribosomal subunits (but not with 30S subunits that are part of 70S ribosomes or polysomes). Required for efficient processing of 16S rRNA. May interact with the 5'-terminal helix region of 16S rRNA. This is Ribosome-binding factor A from Francisella tularensis subsp. novicida (strain U112).